A 669-amino-acid polypeptide reads, in one-letter code: MKLKISFLPTFLIFLISLDSVTAQEICFSGFFKPNSTYDLNRRQILSTLSSNVTSHNGFFNSKFGQAPNRVFINGMCIPGTKPETCSDCIKGASDKISESCPNKTDAYTWPDCCMVRYSNVSFSGSLVMEPSETLYHTGDIEDTGTNLTVFDRIWEELMLRTITAASLSSSNGSSFGQKYFAAEVASLTTFQTMYAMMQCTPDVSSKDCEFCLKTSVGDYESCCRGKQGGAVIRPSCFVRWDLYPYAGAFENVTFPPPPPQSLPQPPVSLIPPPVSDRANTTIKGIIVAIVVPIIVILVSLVVLLVVCRRKKSYKTTEVQATDEITTTHSLQFSFKTIEAATDKFSDSNMIGRGGFGEVYRGKLSSGPEVAVKRLSKTSGQGAEEFKNEAVLVSKLQHKNLVRLLGFCLEGEEKILVYEFVPNKSLDYFLFDPAKQGELDWTRRYNIIGGIARGILYLHQDSRLTIIHRDLKASNILLDADMNPKIADFGMARIFGVDQSQANTRRIAGTFGYMSPEYAMRGHFSMKSDVYSFGVLVLEIISGKKNSSFYNIDDSGSNLVTHAWRLWRNGSPLELVDPTIGESYQSSEATRCIHIALLCVQEDPADRPLLPAIIMMLTSSTTTLHVPRAPGFCLSGRDLEQDGVEYTESTSRSIPGSINDASITEFYPR.

The N-terminal stretch at 1–23 (MKLKISFLPTFLIFLISLDSVTA) is a signal peptide. Gnk2-homologous domains lie at 24–123 (QEIC…NVSF) and 133–246 (ETLY…LYPY). At 24-285 (QEICFSGFFK…SDRANTTIKG (262 aa)) the chain is on the extracellular side. Residues Asn-35, Asn-52, Asn-103, Asn-120, Asn-147, Asn-172, Asn-252, and Asn-280 are each glycosylated (N-linked (GlcNAc...) asparagine). Residues 286–306 (IIVAIVVPIIVILVSLVVLLV) traverse the membrane as a helical segment. The Cytoplasmic segment spans residues 307 to 669 (VCRRKKSYKT…DASITEFYPR (363 aa)). The Protein kinase domain occupies 345–624 (FSDSNMIGRG…MMLTSSTTTL (280 aa)). Residues 351–359 (IGRGGFGEV) and Lys-373 each bind ATP. The residue at position 418 (Tyr-418) is a Phosphotyrosine. The Proton acceptor role is filled by Asp-470. Ser-474 is modified (phosphoserine). Thr-510 carries the post-translational modification Phosphothreonine. Position 518 is a phosphotyrosine (Tyr-518).

The protein belongs to the protein kinase superfamily. Ser/Thr protein kinase family. CRK subfamily.

It is found in the membrane. The catalysed reaction is L-seryl-[protein] + ATP = O-phospho-L-seryl-[protein] + ADP + H(+). It catalyses the reaction L-threonyl-[protein] + ATP = O-phospho-L-threonyl-[protein] + ADP + H(+). The chain is Cysteine-rich receptor-like protein kinase 34 from Arabidopsis thaliana (Mouse-ear cress).